The following is a 341-amino-acid chain: tRNA N6-adenosine threonylcarbamoyltransferase (341 aa).

Positions 115 and 119 each coordinate Fe cation. Residues 138 to 142 (LVSGG), Asp171, Gly184, and Asn276 contribute to the substrate site. Position 304 (Asp304) interacts with Fe cation.

This sequence belongs to the KAE1 / TsaD family. It depends on Fe(2+) as a cofactor.

The protein resides in the cytoplasm. The enzyme catalyses L-threonylcarbamoyladenylate + adenosine(37) in tRNA = N(6)-L-threonylcarbamoyladenosine(37) in tRNA + AMP + H(+). Functionally, required for the formation of a threonylcarbamoyl group on adenosine at position 37 (t(6)A37) in tRNAs that read codons beginning with adenine. Is involved in the transfer of the threonylcarbamoyl moiety of threonylcarbamoyl-AMP (TC-AMP) to the N6 group of A37, together with TsaE and TsaB. TsaD likely plays a direct catalytic role in this reaction. This chain is tRNA N6-adenosine threonylcarbamoyltransferase, found in Stenotrophomonas maltophilia (strain K279a).